The sequence spans 319 residues: Protein SICKLE (319 aa).

3 disordered regions span residues 1-59 (MEDS…TQRF), 71-239 (SFKK…PGAE), and 262-299 (CSDA…SNQQ). Polar residues-rich tracts occupy residues 27–56 (TTGT…SFET) and 78–88 (PKQQYISSPSH). The segment covering 93–103 (PVPPQFPPSVP) has biased composition (pro residues). Residues 185-210 (SYNNTPPQFSNYGRQNANWGGNTYPN) are compositionally biased toward polar residues. The segment covering 228-238 (DGGRRPMEPGA) has biased composition (basic and acidic residues). A compositionally biased stretch (polar residues) spans 285 to 299 (SVTSEATHKTSSNQQ).

Interacts with ubiquitin thioesterases UBP12 and UBP13, and with protein phosphatase 2A subunits PP2AB1, PP2AB2, PP2A3, PP2A4, PP2AA1 and PP2AA2. Expressed in the shoot apical meristem (SAM), embryos, seedlings, root tips, and root and leaf primordia.

It localises to the nucleus. Its subcellular location is the cytoplasm. The protein localises to the cytosol. Functionally, involved in miRNAs and siRNAs biogenesis and thus promotes gene silencing. Modulates auxin (IAA) transport-related developmental programs by regulating protein phosphatase 2A (PP2As)-driven auxin efflux carrier PIN proteins recycling and polarity. Required during development. Necessary for abiotic stress (e.g. chilling and salt) tolerance. This is Protein SICKLE from Arabidopsis thaliana (Mouse-ear cress).